Reading from the N-terminus, the 494-residue chain is Subtilisin-like serine protease EN45_078720 (494 aa).

The N-terminal stretch at 1–16 (MKGFLSLTLLPLLVAA) is a signal peptide. A propeptide spans 17–136 (SPVAVNSIHN…IEKDSEVRTM (120 aa)) (removed in mature form). The Inhibitor I9 domain maps to 43 to 136 (SYIVVFKKHV…IEKDSEVRTM (94 aa)). The 303-residue stretch at 146-448 (PWGLARISHR…GGSANYTKIL (303 aa)) folds into the Peptidase S8 domain. IgE-binding regions lie at residues 180 to 198 (VIDTGANVKHVDFEGRANW) and 209 to 231 (EDGNGHGTHCSGTIAGKKFGVAK). Residues aspartate 182 and histidine 214 each act as charge relay system in the active site. Asparagine 244 and asparagine 280 each carry an N-linked (GlcNAc...) asparagine glycan. The active-site Charge relay system is serine 376. Asparagine 443 carries an N-linked (GlcNAc...) asparagine glycan. A propeptide spans 454 to 494 (KAHNAETTVEDRIGGIIDSAEKAFHKELGAIYSEIKDAVSA) (removed in mature form).

It belongs to the peptidase S8 family.

Functionally, serine protease. The protein is Subtilisin-like serine protease EN45_078720 of Penicillium chrysogenum (Penicillium notatum).